Here is a 424-residue protein sequence, read N- to C-terminus: UPF0597 protein Shewmr7_2876 (424 aa).

Belongs to the UPF0597 family.

This is UPF0597 protein Shewmr7_2876 from Shewanella sp. (strain MR-7).